Reading from the N-terminus, the 69-residue chain is UPF0291 protein CD630_10710 (69 aa).

The protein belongs to the UPF0291 family.

It localises to the cytoplasm. This chain is UPF0291 protein CD630_10710, found in Clostridioides difficile (strain 630) (Peptoclostridium difficile).